We begin with the raw amino-acid sequence, 242 residues long: Ribosomal RNA large subunit methyltransferase E (242 aa).

The S-adenosyl-L-methionine site is built by Gly88, Trp90, Asp111, Asp127, and Asp151. The active-site Proton acceptor is the Lys191.

The protein belongs to the class I-like SAM-binding methyltransferase superfamily. RNA methyltransferase RlmE family.

Its subcellular location is the cytoplasm. It carries out the reaction uridine(2552) in 23S rRNA + S-adenosyl-L-methionine = 2'-O-methyluridine(2552) in 23S rRNA + S-adenosyl-L-homocysteine + H(+). Functionally, specifically methylates the uridine in position 2552 of 23S rRNA at the 2'-O position of the ribose in the fully assembled 50S ribosomal subunit. The polypeptide is Ribosomal RNA large subunit methyltransferase E (Bartonella tribocorum (strain CIP 105476 / IBS 506)).